The following is a 72-amino-acid chain: DNA-directed RNA polymerase subunit epsilon (72 aa).

Belongs to the RNA polymerase subunit epsilon family. In terms of assembly, RNAP is composed of a core of 2 alpha, a beta and a beta' subunit. The core is associated with a delta subunit, and at least one of epsilon or omega. When a sigma factor is associated with the core the holoenzyme is formed, which can initiate transcription.

The catalysed reaction is RNA(n) + a ribonucleoside 5'-triphosphate = RNA(n+1) + diphosphate. A non-essential component of RNA polymerase (RNAP). This chain is DNA-directed RNA polymerase subunit epsilon, found in Levilactobacillus brevis (strain ATCC 367 / BCRC 12310 / CIP 105137 / JCM 1170 / LMG 11437 / NCIMB 947 / NCTC 947) (Lactobacillus brevis).